The following is a 464-amino-acid chain: MAAGNSSWARAAFTFKATVFKKSRYVIYYSLLEHRFSLSLWGILKYSGIYFCTEILRSFPKKRCKSHPYRVDGYPAGSCLDPPLHEPLDTSTPKKISLVSCSNSYMRNKTDNGKVGSRNVSEYKLEGDFASTSKSIYYKLNNLEKMNRKLAWIEAVSSEFSFWEKLRSKQIFPFQNEKDLIAEPFNYELAVSHRRPVIYESISLVPRSVTRTLSRFKAELTNQSNLNLSVHNKFDLAKNQASVSLQYVGFLLFLFPIQIAIENWFLEPRIRGWWNIRQIQLFSNVFQEENALKQLREAEALFWLDDVIGNLADTQLQNFDTDARNETTRLAMMYDELNIQLLLRLATNAISIATLFPLLIFGRKRLAVLNSWIQELFYSLNDTMKAFSILLLTDLCVGFHSPHGWEILVQSLFEYFGLTPNKYVTPCFVSTFPVILDTLFKYWIFRHLNRTSPSIVATYHTMSE.

5 helical membrane-spanning segments follow: residues 36-56 (FSLS…TEIL), 241-261 (ASVS…QIAI), 341-361 (LLLR…LLIF), 389-409 (ILLL…EILV), and 425-445 (TPCF…YWIF).

This sequence belongs to the CemA family.

The protein localises to the plastid. It localises to the chloroplast inner membrane. It carries out the reaction K(+)(in) + H(+)(out) = K(+)(out) + H(+)(in). In terms of biological role, contributes to K(+)/H(+) antiport activity by supporting proton efflux to control proton extrusion and homeostasis in chloroplasts in a light-dependent manner to modulate photosynthesis. Prevents excessive induction of non-photochemical quenching (NPQ) under continuous-light conditions. Indirectly promotes efficient inorganic carbon uptake into chloroplasts. In Adiantum capillus-veneris (Maidenhair fern), this protein is Potassium/proton antiporter CemA.